The primary structure comprises 116 residues: Iron-sulfur cluster insertion protein ErpA (116 aa).

Positions 44, 108, and 110 each coordinate iron-sulfur cluster.

It belongs to the HesB/IscA family. Homodimer. It depends on iron-sulfur cluster as a cofactor.

In terms of biological role, required for insertion of 4Fe-4S clusters for at least IspG. This Aeromonas salmonicida (strain A449) protein is Iron-sulfur cluster insertion protein ErpA.